A 135-amino-acid polypeptide reads, in one-letter code: Large ribosomal subunit protein eL27 (135 aa).

The protein belongs to the eukaryotic ribosomal protein eL27 family.

The sequence is that of Large ribosomal subunit protein eL27 (RPL27) from Pisum sativum (Garden pea).